We begin with the raw amino-acid sequence, 37 residues long: Potassium channel toxin alpha-KTx 3.9 (37 aa).

3 disulfides stabilise this stretch: Cys-7–Cys-27, Cys-13–Cys-32, and Cys-17–Cys-34. Positions 25-32 (GKCMNRKC) are interaction with Ca(2+)-activated K(+) channels.

The protein belongs to the short scorpion toxin superfamily. Potassium channel inhibitor family. Alpha-KTx 03 subfamily. In terms of tissue distribution, expressed by the venom gland.

The protein resides in the secreted. In terms of biological role, binds and inhibits potassium channels. Intracerebroventricular injection into mice induces paralyzing symptoms followed by death. Its binding affinity to rat brain synaptosomes is 5-fold lower than this of KTX 1. In Buthus occitanus tunetanus (Common European scorpion), this protein is Potassium channel toxin alpha-KTx 3.9 (KTX3).